A 562-amino-acid polypeptide reads, in one-letter code: Long-chain-fatty-acid--CoA ligase (562 aa).

Residue 213–224 coordinates ATP; sequence YTGGTTGVAKGA.

The protein belongs to the ATP-dependent AMP-binding enzyme family. Mg(2+) is required as a cofactor.

Its subcellular location is the membrane. It catalyses the reaction a long-chain fatty acid + ATP + CoA = a long-chain fatty acyl-CoA + AMP + diphosphate. The protein operates within lipid metabolism; fatty acid beta-oxidation. Its function is as follows. Catalyzes the esterification, concomitant with transport, of exogenous long-chain fatty acids into metabolically active CoA thioesters for subsequent degradation or incorporation into phospholipids. This chain is Long-chain-fatty-acid--CoA ligase (fadD), found in Yersinia pestis.